The sequence spans 49 residues: Light-harvesting protein B-875 beta chain (49 aa).

Residues 2 to 27 lie on the Cytoplasmic side of the membrane; sequence ADKSDLGYTGLTDEQAQELHSVYMSG. Residues His21 and His39 each coordinate a bacteriochlorophyll. Residues 28–45 traverse the membrane as a helical; Signal-anchor for type II membrane protein segment; that stretch reads LWLFSAVAIVAHLAVYIW. The Periplasmic portion of the chain corresponds to 46–49; that stretch reads RPWF.

The protein belongs to the antenna complex beta subunit family. As to quaternary structure, the core complex is formed by different alpha and beta chains, binding bacteriochlorophyll molecules, and arranged most probably in tetrameric structures disposed around the reaction center. The non-pigmented gamma chains may constitute additional components.

Its subcellular location is the cell inner membrane. In terms of biological role, antenna complexes are light-harvesting systems, which transfer the excitation energy to the reaction centers. The protein is Light-harvesting protein B-875 beta chain (pufB) of Cereibacter sphaeroides (strain ATCC 17023 / DSM 158 / JCM 6121 / CCUG 31486 / LMG 2827 / NBRC 12203 / NCIMB 8253 / ATH 2.4.1.) (Rhodobacter sphaeroides).